The following is a 103-amino-acid chain: Large ribosomal subunit protein bL21 (103 aa).

The protein belongs to the bacterial ribosomal protein bL21 family. In terms of assembly, part of the 50S ribosomal subunit. Contacts protein L20.

Its function is as follows. This protein binds to 23S rRNA in the presence of protein L20. The sequence is that of Large ribosomal subunit protein bL21 from Haemophilus influenzae (strain 86-028NP).